The chain runs to 360 residues: NADH-quinone oxidoreductase subunit H (360 aa).

The next 8 membrane-spanning stretches (helical) occupy residues 22 to 42 (ITVG…IPLI), 97 to 117 (ALFY…WAVI), 130 to 150 (IGLL…IIAG), 170 to 190 (ISYE…SGSM), 208 to 228 (VFSW…ISAV), 255 to 275 (GFAF…IAAL), 292 to 312 (WGFI…AVLY), and 336 to 356 (VLIP…ISPL).

Belongs to the complex I subunit 1 family. As to quaternary structure, NDH-1 is composed of 14 different subunits. Subunits NuoA, H, J, K, L, M, N constitute the membrane sector of the complex.

The protein localises to the cell inner membrane. The catalysed reaction is a quinone + NADH + 5 H(+)(in) = a quinol + NAD(+) + 4 H(+)(out). Functionally, NDH-1 shuttles electrons from NADH, via FMN and iron-sulfur (Fe-S) centers, to quinones in the respiratory chain. The immediate electron acceptor for the enzyme in this species is believed to be ubiquinone. Couples the redox reaction to proton translocation (for every two electrons transferred, four hydrogen ions are translocated across the cytoplasmic membrane), and thus conserves the redox energy in a proton gradient. This subunit may bind ubiquinone. The sequence is that of NADH-quinone oxidoreductase subunit H from Neisseria meningitidis serogroup C / serotype 2a (strain ATCC 700532 / DSM 15464 / FAM18).